The chain runs to 646 residues: Glutamine--tRNA ligase protein virJ (646 aa).

The tract at residues N25–E65 is disordered. The span at A38–A61 shows a compositional bias: low complexity. The 'HIGH' region motif lies at P98–H108. Residues E99–N101 and H105–A111 contribute to the ATP site. L-glutamine contacts are provided by D147 and Y296. Residues T315, R344–L345, and M352–K354 each bind ATP. The 'KMSKS' region motif lies at I351 to R355.

This sequence belongs to the class-I aminoacyl-tRNA synthetase family.

It carries out the reaction tRNA(Gln) + L-glutamine + ATP = L-glutaminyl-tRNA(Gln) + AMP + diphosphate. Glutamine--tRNA ligase; part of the gene cluster that mediates the biosynthesis of virensols and trichoxide, fungal natural products that contain or are derived from a salicylaldehyde core. VirJ does not seem to play any role in virensols and trichoxide biosynthesis. The protein is Glutamine--tRNA ligase protein virJ of Hypocrea virens (strain Gv29-8 / FGSC 10586) (Gliocladium virens).